We begin with the raw amino-acid sequence, 486 residues long: Kynureninase 1 (486 aa).

Residues 53-72 (DLKRTTLDPNQEPEHSPTPS) form a disordered region. Pyridoxal 5'-phosphate contacts are provided by residues Leu146, Thr147, 174–177 (FPSD), Ser231, Asp260, His263, and Tyr285. Lys286 carries the N6-(pyridoxal phosphate)lysine modification. Trp326 and Asn354 together coordinate pyridoxal 5'-phosphate.

It belongs to the kynureninase family. Homodimer. It depends on pyridoxal 5'-phosphate as a cofactor.

The protein localises to the cytoplasm. It carries out the reaction L-kynurenine + H2O = anthranilate + L-alanine + H(+). It catalyses the reaction 3-hydroxy-L-kynurenine + H2O = 3-hydroxyanthranilate + L-alanine + H(+). Its pathway is amino-acid degradation; L-kynurenine degradation; L-alanine and anthranilate from L-kynurenine: step 1/1. It participates in cofactor biosynthesis; NAD(+) biosynthesis; quinolinate from L-kynurenine: step 2/3. Catalyzes the cleavage of L-kynurenine (L-Kyn) and L-3-hydroxykynurenine (L-3OHKyn) into anthranilic acid (AA) and 3-hydroxyanthranilic acid (3-OHAA), respectively. In Aspergillus clavatus (strain ATCC 1007 / CBS 513.65 / DSM 816 / NCTC 3887 / NRRL 1 / QM 1276 / 107), this protein is Kynureninase 1 (bna5-1).